The following is a 596-amino-acid chain: Proline--tRNA ligase (596 aa).

Belongs to the class-II aminoacyl-tRNA synthetase family. ProS type 1 subfamily. Homodimer.

It is found in the cytoplasm. It carries out the reaction tRNA(Pro) + L-proline + ATP = L-prolyl-tRNA(Pro) + AMP + diphosphate. Catalyzes the attachment of proline to tRNA(Pro) in a two-step reaction: proline is first activated by ATP to form Pro-AMP and then transferred to the acceptor end of tRNA(Pro). As ProRS can inadvertently accommodate and process non-cognate amino acids such as alanine and cysteine, to avoid such errors it has two additional distinct editing activities against alanine. One activity is designated as 'pretransfer' editing and involves the tRNA(Pro)-independent hydrolysis of activated Ala-AMP. The other activity is designated 'posttransfer' editing and involves deacylation of mischarged Ala-tRNA(Pro). The misacylated Cys-tRNA(Pro) is not edited by ProRS. The protein is Proline--tRNA ligase of Prochlorococcus marinus (strain NATL1A).